A 226-amino-acid chain; its full sequence is Leucyl/phenylalanyl-tRNA--protein transferase (226 aa).

It belongs to the L/F-transferase family.

The protein localises to the cytoplasm. The enzyme catalyses N-terminal L-lysyl-[protein] + L-leucyl-tRNA(Leu) = N-terminal L-leucyl-L-lysyl-[protein] + tRNA(Leu) + H(+). The catalysed reaction is N-terminal L-arginyl-[protein] + L-leucyl-tRNA(Leu) = N-terminal L-leucyl-L-arginyl-[protein] + tRNA(Leu) + H(+). It catalyses the reaction L-phenylalanyl-tRNA(Phe) + an N-terminal L-alpha-aminoacyl-[protein] = an N-terminal L-phenylalanyl-L-alpha-aminoacyl-[protein] + tRNA(Phe). Functionally, functions in the N-end rule pathway of protein degradation where it conjugates Leu, Phe and, less efficiently, Met from aminoacyl-tRNAs to the N-termini of proteins containing an N-terminal arginine or lysine. The polypeptide is Leucyl/phenylalanyl-tRNA--protein transferase (Pseudomonas fluorescens (strain Pf0-1)).